The sequence spans 311 residues: Malate dehydrogenase (311 aa).

NAD(+)-binding positions include 7–12 (GAGNVG) and D32. 2 residues coordinate substrate: R82 and R88. Residues N95 and 118 to 120 (VSN) each bind NAD(+). 2 residues coordinate substrate: N120 and R151. H175 acts as the Proton acceptor in catalysis.

The protein belongs to the LDH/MDH superfamily. MDH type 3 family.

The enzyme catalyses (S)-malate + NAD(+) = oxaloacetate + NADH + H(+). Its function is as follows. Catalyzes the reversible oxidation of malate to oxaloacetate. This chain is Malate dehydrogenase, found in Flavobacterium johnsoniae (strain ATCC 17061 / DSM 2064 / JCM 8514 / BCRC 14874 / CCUG 350202 / NBRC 14942 / NCIMB 11054 / UW101) (Cytophaga johnsonae).